We begin with the raw amino-acid sequence, 204 residues long: Colicin-A (204 aa).

Helical transmembrane passes span 139–161 (SWVL…LGAY) and 165–187 (LGVP…GALI).

The protein belongs to the channel forming colicin family.

It is found in the cell membrane. Functionally, this colicin is a channel-forming colicin. This class of transmembrane toxins depolarize the cytoplasmic membrane, leading to dissipation of cellular energy. In terms of biological role, colicins are polypeptide toxins produced by and active against E.coli and closely related bacteria. This chain is Colicin-A (caa), found in Escherichia coli.